The sequence spans 599 residues: Riboflavin biosynthesis protein PYRR, chloroplastic (599 aa).

Residues 1-17 (MALSFRISSSSPLICRA) constitute a chloroplast transit peptide. Residues 30-152 (TTDAAFIRRA…ELRSHGIEVN (123 aa)) enclose the CMP/dCMP-type deaminase domain.

This sequence in the C-terminal section; belongs to the YbiA family.

It localises to the plastid. It is found in the chloroplast. It carries out the reaction 5-amino-6-(5-phospho-D-ribitylamino)uracil + NADP(+) = 5-amino-6-(5-phospho-D-ribosylamino)uracil + NADPH + H(+). The enzyme catalyses 2,5-diamino-6-hydroxy-4-(5-phosphoribosylamino)-pyrimidine + H2O = 2,5,6-triamino-4-hydroxypyrimidine + D-ribose 5-phosphate. The catalysed reaction is 5-amino-6-(5-phospho-D-ribosylamino)uracil + H2O = 5,6-diaminouracil + D-ribose 5-phosphate. It functions in the pathway cofactor biosynthesis; riboflavin biosynthesis; 5-amino-6-(D-ribitylamino)uracil from GTP: step 3/4. Its function is as follows. Pyrimidine reductase involved in the riboflavin biosynthesis pathway. Also has a non-functional N-terminal deaminase domain that lacks the catalytically essential zinc-binding residues. Catalyzes the hydrolysis of the N-glycosidic bond in the first two intermediates of riboflavin biosynthesis, which are highly reactive metabolites, yielding relatively innocuous products. Thus, can divert a surplus of harmful intermediates into relatively harmless products and pre-empt the damage these intermediates would otherwise do. Helps maintain flavin levels. Has no activity against GTP, nucleoside monophosphates or ADP-ribose. The sequence is that of Riboflavin biosynthesis protein PYRR, chloroplastic (PYRR) from Arabidopsis thaliana (Mouse-ear cress).